The following is a 484-amino-acid chain: Cysteine--tRNA ligase (484 aa).

Cys29 lines the Zn(2+) pocket. The short motif at 31-41 is the 'HIGH' region element; that stretch reads PTVQSAPHIGH. Zn(2+) is bound by residues Cys219, His244, and Glu248. The short motif at 275–279 is the 'KMSKS' region element; sequence KMSKS. Lys278 contacts ATP.

Belongs to the class-I aminoacyl-tRNA synthetase family. In terms of assembly, monomer. Zn(2+) serves as cofactor.

It localises to the cytoplasm. It carries out the reaction tRNA(Cys) + L-cysteine + ATP = L-cysteinyl-tRNA(Cys) + AMP + diphosphate. The chain is Cysteine--tRNA ligase from Clavibacter sepedonicus (Clavibacter michiganensis subsp. sepedonicus).